The sequence spans 336 residues: MKDRYILAFETSCDETSVAVLKNDDELLSNVIASQIESHKRFGGVVPEVASRHHVEVITACIEEALAEAGITEEDVTAVAVTYGPGLVGALLVGLSAAKAFAWAHGLPLIPVNHMAGHLMAAQSVEPLEFPLLALLVSGGHTELVYVSEAGDYKIVGETRDDAVGEAYDKVGRVMGLTYPAGREIDELAHQGQDIYDFPRAMIKEDNLEFSFSGLKSAFINLHHNAEQKGESLSTEDLCASFQAAVMDILMAKTKKALEKYPVKTLVVAGGVAANKGLRERLAAEITDVKVIIPPLRLCGDNAGMIAYASVSEWNKENFAGWDLNAKPSLAFDTME.

Fe cation is bound by residues H114 and H118. Substrate-binding positions include 136–140, D169, G182, D186, and N275; that span reads LVSGG. D301 is a binding site for Fe cation.

It belongs to the KAE1 / TsaD family. The cofactor is Fe(2+).

Its subcellular location is the cytoplasm. The enzyme catalyses L-threonylcarbamoyladenylate + adenosine(37) in tRNA = N(6)-L-threonylcarbamoyladenosine(37) in tRNA + AMP + H(+). Functionally, required for the formation of a threonylcarbamoyl group on adenosine at position 37 (t(6)A37) in tRNAs that read codons beginning with adenine. Is involved in the transfer of the threonylcarbamoyl moiety of threonylcarbamoyl-AMP (TC-AMP) to the N6 group of A37, together with TsaE and TsaB. TsaD likely plays a direct catalytic role in this reaction. This is tRNA N6-adenosine threonylcarbamoyltransferase from Streptococcus pneumoniae (strain JJA).